A 64-amino-acid chain; its full sequence is uncharacterized protein (64 aa).

The disordered stretch occupies residues M1–Y64. Positions P8–N32 are enriched in low complexity.

This is an uncharacterized protein from Dictyostelium discoideum (Social amoeba).